Reading from the N-terminus, the 354-residue chain is MRVHEEASEDKEREVEEAPDLMPLSPPLTAAATAAVVAVAGQRLVVGYALTKKKVKSFLQPKLLSLARKKSIHFVSIDETRPLSEQGPFDIILHKLTDKEWQQVLEDYREEHPEVTVLDPPNAIQHLHNRQSMLQEVADLNLSNAYGEVCTPRQLVIMKDPLSIPSAVAKAGLTLPLVAKPLVVDGTSKSHELSLAYVETSLSMLDPPLVLQEFVNHGGILFKVYVVGETIRVVRRFSLPDVNIYDLENNDGIFRFPRVSCATNTAEDAEVDPSIAELPPKPLLEKLGRELRRRLGLRLFNFDMIREHGRKDRYYVIDINYFPGYGKMPGYEHIFIDFLLSLVQNKYKRRLSGS.

The span at 1–16 (MRVHEEASEDKEREVE) shows a compositional bias: basic and acidic residues. The tract at residues 1-24 (MRVHEEASEDKEREVEEAPDLMPL) is disordered. Residues lysine 53 and lysine 95 each coordinate 1D-myo-inositol 1,3,4-trisphosphate. ATP is bound by residues arginine 130 and lysine 180. The 208-residue stretch at 140 to 347 (LNLSNAYGEV…FLLSLVQNKY (208 aa)) folds into the ATP-grasp domain. 1D-myo-inositol 1,3,4-trisphosphate contacts are provided by histidine 191 and lysine 223. Residues 212-223 (QEFVNHGGILFK) and serine 238 each bind ATP. Aspartate 303, aspartate 318, and asparagine 320 together coordinate Mg(2+). Asparagine 320 provides a ligand contact to 1D-myo-inositol 1,3,4-trisphosphate.

It belongs to the ITPK1 family. In terms of assembly, monomer. Requires Mg(2+) as cofactor. In terms of tissue distribution, expressed in roots, leaves, flowers, anthers and embryos.

It carries out the reaction 1D-myo-inositol 3,4,5,6-tetrakisphosphate + ATP = 1D-myo-inositol 1,3,4,5,6-pentakisphosphate + ADP + H(+). The catalysed reaction is 1D-myo-inositol 1,3,4-trisphosphate + ATP = 1D-myo-inositol 1,3,4,5-tetrakisphosphate + ADP + H(+). It catalyses the reaction 1D-myo-inositol 1,3,4-trisphosphate + ATP = 1D-myo-inositol 1,3,4,6-tetrakisphosphate + ADP + H(+). Functionally, kinase that can phosphorylate various inositol polyphosphate such as Ins(3,4,5,6)P4 or Ins(1,3,4)P3 and participates in phytic acid biosynthesis in developing seeds. Phytic acid is the primary storage form of phosphorus in cereal grains and other plant seeds. The sequence is that of Inositol-tetrakisphosphate 1-kinase 1 from Oryza sativa subsp. japonica (Rice).